The chain runs to 391 residues: Phosphoprotein (391 aa).

Phosphothreonine is present on residues threonine 10 and threonine 16. A compositionally biased stretch (polar residues) spans 54 to 65; sequence QKNIQHPTASHQ. 2 disordered regions span residues 54–98 and 145–186; these read QKNI…EPLF and TSTP…RSGS. Serine 69 is modified (phosphoserine). 3 positions are modified to phosphothreonine: threonine 91, threonine 150, and threonine 165. Serine 188 carries the phosphoserine modification. Positions 218-245 form a coiled coil; it reads ANEIMDLLRGMDARLQHLEQKVDKVLAQ. Threonine 250 carries the post-translational modification Phosphothreonine. Serine 257 carries the post-translational modification Phosphoserine. Threonine 258 and threonine 282 each carry phosphothreonine. A phosphoserine mark is found at serine 292 and serine 294. The residue at position 298 (threonine 298) is a Phosphothreonine. Phosphoserine is present on residues serine 301 and serine 374. An interaction with the nucleoprotein region spans residues 343–391; the sequence is AGRKVMITKMITDCVANPQMKQAFEQRLAKASTEDALNDIKRDIIRNAI. The residue at position 375 (threonine 375) is a Phosphothreonine.

This sequence belongs to the rubulavirus/avulavirus P protein family. In terms of assembly, homotetramer. Interacts (via multimerization domain) with polymerase L; this interaction forms the polymerase L-P complex. Interacts (via N-terminus) with N0 (via Ncore); this interaction allows P to chaperon N0 to avoid N polymerization before encapsidation. Interacts (via C-terminus) with N-RNA template; this interaction positions the polymerase on the template for both transcription and replication. Interacts with host RPS6KB1 kinase; this interaction may play a role in the viral replication and transcription.

Its subcellular location is the virion. Its function is as follows. Essential cofactor of the RNA polymerase L that plays a central role in the transcription and replication by forming the polymerase complex with RNA polymerase L and recruiting L to the genomic N-RNA template for RNA synthesis. Also plays a central role in the encapsidation of nascent RNA chains by forming the encapsidation complex with the nucleocapsid protein N (N-P complex). Acts as a chaperone for newly synthesized free N protein, so-called N0, allowing encapsidation of nascent RNA chains during replication. The nucleoprotein protein N prevents excessive phosphorylation of P, which leads to down-regulation of viral transcription/ replication. Participates, together with N, in the formation of viral factories (viroplasms), which are large inclusions in the host cytoplasm where replication takes place. This chain is Phosphoprotein, found in Mumps virus genotype N (strain L-Zagreb vaccine) (MuV).